A 115-amino-acid polypeptide reads, in one-letter code: Large ribosomal subunit protein uL18 (115 aa).

Residues 1-20 (MKYTKQEARKRRHYRVRSKV) are disordered. Basic residues predominate over residues 8–18 (ARKRRHYRVRS).

This sequence belongs to the universal ribosomal protein uL18 family. In terms of assembly, part of the 50S ribosomal subunit; part of the 5S rRNA/L5/L18/L25 subcomplex. Contacts the 5S and 23S rRNAs.

This is one of the proteins that bind and probably mediate the attachment of the 5S RNA into the large ribosomal subunit, where it forms part of the central protuberance. This chain is Large ribosomal subunit protein uL18, found in Mesoplasma florum (strain ATCC 33453 / NBRC 100688 / NCTC 11704 / L1) (Acholeplasma florum).